Consider the following 157-residue polypeptide: Crossover junction endodeoxyribonuclease RuvC (157 aa).

Residues Asp7, Glu67, and Asp139 contribute to the active site. The Mg(2+) site is built by Asp7, Glu67, and Asp139.

Belongs to the RuvC family. As to quaternary structure, homodimer which binds Holliday junction (HJ) DNA. The HJ becomes 2-fold symmetrical on binding to RuvC with unstacked arms; it has a different conformation from HJ DNA in complex with RuvA. In the full resolvosome a probable DNA-RuvA(4)-RuvB(12)-RuvC(2) complex forms which resolves the HJ. It depends on Mg(2+) as a cofactor.

Its subcellular location is the cytoplasm. It carries out the reaction Endonucleolytic cleavage at a junction such as a reciprocal single-stranded crossover between two homologous DNA duplexes (Holliday junction).. Its function is as follows. The RuvA-RuvB-RuvC complex processes Holliday junction (HJ) DNA during genetic recombination and DNA repair. Endonuclease that resolves HJ intermediates. Cleaves cruciform DNA by making single-stranded nicks across the HJ at symmetrical positions within the homologous arms, yielding a 5'-phosphate and a 3'-hydroxyl group; requires a central core of homology in the junction. The consensus cleavage sequence is 5'-(A/T)TT(C/G)-3'. Cleavage occurs on the 3'-side of the TT dinucleotide at the point of strand exchange. HJ branch migration catalyzed by RuvA-RuvB allows RuvC to scan DNA until it finds its consensus sequence, where it cleaves and resolves the cruciform DNA. The chain is Crossover junction endodeoxyribonuclease RuvC from Prochlorococcus marinus (strain MIT 9312).